The chain runs to 754 residues: MKETIQADWIKSEAFNLENCCNDNPLNILGPHFVNGQWITRVWMPEADEVNIIFKDKTYKTTTLNHKWLFEVTLPEDPKNNYQINVSRGGVSHSQQDPWAYRKEWMGELDRHLFAEGNHHHIWEKMGAHIHEETNQQGVMFCIWAPNAKSISIIGDINSWDGRHHPMQKRLGGIWELFMPIMKEGDAYKYEIRTQEGHIYEKADPYGFLHEIRPQNGSIVSKLNNFDWEDSSWITNRDSSSQINKPISVYEMHLGSWMHDSIENKYIEKNGQTRSPVPAADLKPGTRFLTYPELTEKLIPYVKERGFTHIELMPISEHPFDGSWGYQVTGWYAPTSRYGTPNEFKEFINRCHAEGIGVILDWVPGHFPKDKHGLAFFDGCHLYEHGDPRIGEHKEWGTLIFNYSRNEVRNFLVANLIYWFEEFHIDGIRVDAVASMLYRDYLRPEGEWIPNENGGNENLEAVKFLQQANHVLFQHFPGALSIAEESTTWPMVTEPTNVGGLGFNLKWNMGWMHDMLDYFEIDPWFRQFHQNSVTFSITYNYTENFMLALSHDEVVHGKSHLLHKMPGDDWKKFANTRALLTYMWTHPGKKTIFMGMEFGQRQEWNVWDDLQWELLEFEPHKGIRNLVDDLNKLYKNEPSLWKNDFDPYGFQWIDCNDTSNSVISFMRRENESNEWLVIVANFTPNFHGSYKIGVPLEGFYKEIFNSDGSKYGGSNKGNMGGKETLKYNIHNYENALEIVLPPLSVSIFKHQLKQ.

Aspartate 431 acts as the Nucleophile in catalysis. Glutamate 484 serves as the catalytic Proton donor.

This sequence belongs to the glycosyl hydrolase 13 family. GlgB subfamily. As to quaternary structure, monomer.

The enzyme catalyses Transfers a segment of a (1-&gt;4)-alpha-D-glucan chain to a primary hydroxy group in a similar glucan chain.. It functions in the pathway glycan biosynthesis; glycogen biosynthesis. Functionally, catalyzes the formation of the alpha-1,6-glucosidic linkages in glycogen by scission of a 1,4-alpha-linked oligosaccharide from growing alpha-1,4-glucan chains and the subsequent attachment of the oligosaccharide to the alpha-1,6 position. This chain is 1,4-alpha-glucan branching enzyme GlgB, found in Prochlorococcus marinus subsp. pastoris (strain CCMP1986 / NIES-2087 / MED4).